We begin with the raw amino-acid sequence, 418 residues long: Serine hydroxymethyltransferase (418 aa).

Residues Leu121 and 125–127 (GHL) contribute to the (6S)-5,6,7,8-tetrahydrofolate site. Lys230 carries the N6-(pyridoxal phosphate)lysine modification. (6S)-5,6,7,8-tetrahydrofolate contacts are provided by residues Glu246 and 355 to 357 (SPF).

It belongs to the SHMT family. Homodimer. Pyridoxal 5'-phosphate is required as a cofactor.

It localises to the cytoplasm. It carries out the reaction (6R)-5,10-methylene-5,6,7,8-tetrahydrofolate + glycine + H2O = (6S)-5,6,7,8-tetrahydrofolate + L-serine. It participates in one-carbon metabolism; tetrahydrofolate interconversion. It functions in the pathway amino-acid biosynthesis; glycine biosynthesis; glycine from L-serine: step 1/1. Its function is as follows. Catalyzes the reversible interconversion of serine and glycine with tetrahydrofolate (THF) serving as the one-carbon carrier. This reaction serves as the major source of one-carbon groups required for the biosynthesis of purines, thymidylate, methionine, and other important biomolecules. Also exhibits THF-independent aldolase activity toward beta-hydroxyamino acids, producing glycine and aldehydes, via a retro-aldol mechanism. In Streptococcus pneumoniae (strain Taiwan19F-14), this protein is Serine hydroxymethyltransferase.